A 64-amino-acid chain; its full sequence is Alpha-conotoxin SI (64 aa).

A signal peptide spans 1–21; that stretch reads MGMRMMFTVFLLVVLATTVVS. Positions 22 to 49 are excised as a propeptide; it reads FPSDRASDGRDDEAKDERSDMHESDRKE. The segment at 23–47 is disordered; the sequence is PSDRASDGRDDEAKDERSDMHESDR. The segment covering 26-47 has biased composition (basic and acidic residues); it reads RASDGRDDEAKDERSDMHESDR. Intrachain disulfides connect C51–C56 and C52–C62. C62 is subject to Cysteine amide.

The protein belongs to the conotoxin A superfamily. As to expression, expressed by the venom duct.

It is found in the secreted. Functionally, alpha-conotoxins act on postsynaptic membranes, they bind to the nicotinic acetylcholine receptors (nAChR) and thus inhibit them. Is active on muscle nAChR (IC(50)=113 nM on adult subtype (alpha-1-beta-1-gamma-delta/CHRNA1-CHRNB1-CHRNG-CHRND) and IC(50)=142 nM on fetal subtype (alpha-1-beta-1-delta-epsilon/CHRNA1-CHRNB1-CHRND-CHRNE)). On mice muscle receptors, its higher affinity site is the alpha/delta nAChR subunit interface. On Torpedo receptors, it does not distinguish between alpha/delta and alpha/gamma acetylcholine-binding sites. In vivo, causes paralysis followed by death when injected into goldfish. In contrast, has no effect on mice, when similar doses are intraperitoneally or intracerebrally injected. The polypeptide is Alpha-conotoxin SI (Conus striatus (Striated cone)).